Consider the following 340-residue polypeptide: Beta-hexosaminidase (340 aa).

Residues D60, R68, R127, and 157–158 (KH) contribute to the substrate site. Catalysis depends on H170, which acts as the Proton donor/acceptor. D242 serves as the catalytic Nucleophile.

It belongs to the glycosyl hydrolase 3 family. NagZ subfamily.

It localises to the cytoplasm. The catalysed reaction is Hydrolysis of terminal non-reducing N-acetyl-D-hexosamine residues in N-acetyl-beta-D-hexosaminides.. It functions in the pathway cell wall biogenesis; peptidoglycan recycling. Plays a role in peptidoglycan recycling by cleaving the terminal beta-1,4-linked N-acetylglucosamine (GlcNAc) from peptide-linked peptidoglycan fragments, giving rise to free GlcNAc, anhydro-N-acetylmuramic acid and anhydro-N-acetylmuramic acid-linked peptides. The sequence is that of Beta-hexosaminidase from Glaesserella parasuis serovar 5 (strain SH0165) (Haemophilus parasuis).